The sequence spans 291 residues: Putative phosphatase MG263 (291 aa).

The Nucleophile role is filled by aspartate 11. Aspartate 11 is a binding site for Mg(2+). Phosphate is bound at residue leucine 12. Aspartate 13 is a Mg(2+) binding site. Residues 60–61 and lysine 217 each bind phosphate; that span reads TG. Position 241 (aspartate 241) interacts with Mg(2+). Asparagine 244 is a binding site for phosphate.

This sequence belongs to the HAD-like hydrolase superfamily. Cof family. The cofactor is Mg(2+).

The sequence is that of Putative phosphatase MG263 from Mycoplasma genitalium (strain ATCC 33530 / DSM 19775 / NCTC 10195 / G37) (Mycoplasmoides genitalium).